Here is a 147-residue protein sequence, read N- to C-terminus: Leghemoglobin 6 (147 aa).

Positions 2 to 147 (SFTDKQEALV…LATEIKKAMS (146 aa)) constitute a Globin domain. Tyr-25 and Tyr-30 each carry nitrated tyrosine. Ser-45 serves as a coordination point for heme b. Ser-45 is subject to Phosphoserine. Residue His-62 participates in O2 binding. Lys-65, His-94, and Lys-97 together coordinate heme b. A Nitrated tyrosine modification is found at Tyr-135.

Belongs to the plant globin family. In terms of assembly, monomer. Nitrated in effective nodules and particularly in hypoxic conditions; this mechanism may play a protective role in the symbiosis by buffering toxic peroxynitrite NO(2)(-). Nitration level decrease during nodule senescence. In terms of processing, phosphorylation at Ser-45 disrupts the molecular environment of its porphyrin ring oxygen binding pocket, thus leading to a reduced oxygen consumption and to the delivery of oxygen O(2) to symbiosomes. Root nodules.

Its subcellular location is the cytoplasm. It localises to the cytosol. The protein resides in the nucleus. Leghemoglobin that reversibly binds oxygen O(2) through a pentacoordinated heme iron. In root nodules, facilitates the diffusion of oxygen to the bacteroids while preventing the bacterial nitrogenase from being inactivated by buffering dioxygen, nitric oxide and carbon monoxide, and promoting the formation of reactive oxygen species (ROS, e.g. H(2)O(2)). This role is essential for symbiotic nitrogen fixation (SNF). This is Leghemoglobin 6 from Medicago truncatula (Barrel medic).